Reading from the N-terminus, the 446-residue chain is AP-2 complex subunit mu (446 aa).

Phosphoserine occurs at positions 145, 151, and 152. Thr157 bears the Phosphothreonine mark. The MHD domain maps to 177 to 445; the sequence is KNSIYIDIVE…STRAGTCEIR (269 aa).

Belongs to the adaptor complexes medium subunit family. Adaptor protein complex 2 (AP-2) is a heterotetramer composed of two large adaptins (alpha-type subunit apl3 and beta-type subunit apl1), a medium chain (mu-type subunit apm4) and a small adaptin (sigma-type subunit aps2).

The protein localises to the cell membrane. Its subcellular location is the membrane. It localises to the coated pit. In terms of biological role, component of the adaptor complexes which link clathrin to receptors in coated vesicles. Clathrin-associated protein complexes are believed to interact with the cytoplasmic tails of membrane proteins, leading to their selection and concentration. AP50 is a subunit of the plasma membrane adaptor (Potential). In Schizosaccharomyces pombe (strain 972 / ATCC 24843) (Fission yeast), this protein is AP-2 complex subunit mu (apm4).